Consider the following 361-residue polypeptide: Microtubule-associated protein Jupiter (361 aa).

Over residues 1-15 (MISNYDITDSKSSSK) the composition is skewed to polar residues. Disordered regions lie at residues 1–38 (MISN…TPRN) and 70–99 (IGDN…TPGK). S24 carries the phosphoserine modification. T35 carries the phosphothreonine modification. Residues 73 to 87 (NPRRGQKPVDSHSRL) are compositionally biased toward basic and acidic residues. T96 is subject to Phosphothreonine. Position 105 is a phosphoserine (S105). 2 stretches are compositionally biased toward low complexity: residues 125–134 (GSSTANTTNG) and 141–154 (SGSV…VSSS). Disordered regions lie at residues 125-165 (GSST…SGSR) and 328-361 (GSTN…SGLW). Phosphoserine is present on residues S143 and S154. Over residues 155-165 (TENLKMNSGSR) the composition is skewed to polar residues.

This sequence belongs to the MAP Jupiter family.

Its subcellular location is the nucleus. It is found in the cytoplasm. The protein localises to the cytoskeleton. It localises to the spindle. Functionally, binds to all microtubule populations. The protein is Microtubule-associated protein Jupiter of Drosophila persimilis (Fruit fly).